Reading from the N-terminus, the 278-residue chain is NH(3)-dependent NAD(+) synthetase (278 aa).

39–46 (GVSGGVDS) contacts ATP. A Mg(2+)-binding site is contributed by Asp-45. Arg-121 is a deamido-NAD(+) binding site. Thr-141 serves as a coordination point for ATP. Glu-146 is a binding site for Mg(2+). Lys-154 and Asp-161 together coordinate deamido-NAD(+). ATP is bound by residues Lys-170 and Ser-192. Residue 252-253 (HK) participates in deamido-NAD(+) binding.

This sequence belongs to the NAD synthetase family. Homodimer.

The catalysed reaction is deamido-NAD(+) + NH4(+) + ATP = AMP + diphosphate + NAD(+) + H(+). It functions in the pathway cofactor biosynthesis; NAD(+) biosynthesis; NAD(+) from deamido-NAD(+) (ammonia route): step 1/1. Its function is as follows. Catalyzes the ATP-dependent amidation of deamido-NAD to form NAD. Uses ammonia as a nitrogen source. The protein is NH(3)-dependent NAD(+) synthetase of Saccharolobus solfataricus (strain ATCC 35092 / DSM 1617 / JCM 11322 / P2) (Sulfolobus solfataricus).